The following is a 217-amino-acid chain: Peroxiredoxin (217 aa).

The Thioredoxin domain occupies 2–159 (VVIGEKFPEV…VVRLVKALQT (158 aa)). Cysteine 46 functions as the Cysteine sulfenic acid (-SOH) intermediate in the catalytic mechanism. Arginine 122 lines the substrate pocket.

It belongs to the peroxiredoxin family. Prx6 subfamily. In terms of assembly, homodecamer. Pentamer of dimers that assemble into a ring structure.

It localises to the cytoplasm. It catalyses the reaction a hydroperoxide + [thioredoxin]-dithiol = an alcohol + [thioredoxin]-disulfide + H2O. Thiol-specific peroxidase that catalyzes the reduction of hydrogen peroxide and organic hydroperoxides to water and alcohols, respectively. Plays a role in cell protection against oxidative stress by detoxifying peroxides. The protein is Peroxiredoxin of Methanococcus maripaludis (strain C5 / ATCC BAA-1333).